Reading from the N-terminus, the 572-residue chain is Glutamate--tRNA ligase (572 aa).

A 'HIGH' region motif is present at residues 107–117 (PNPDGAFHLGN).

The protein belongs to the class-I aminoacyl-tRNA synthetase family. Glutamate--tRNA ligase type 2 subfamily.

It is found in the cytoplasm. The enzyme catalyses tRNA(Glu) + L-glutamate + ATP = L-glutamyl-tRNA(Glu) + AMP + diphosphate. Functionally, catalyzes the attachment of glutamate to tRNA(Glu) in a two-step reaction: glutamate is first activated by ATP to form Glu-AMP and then transferred to the acceptor end of tRNA(Glu). This Pyrococcus furiosus (strain ATCC 43587 / DSM 3638 / JCM 8422 / Vc1) protein is Glutamate--tRNA ligase.